Consider the following 155-residue polypeptide: Small ribosomal subunit protein uS7cz/uS7cy (155 aa).

Belongs to the universal ribosomal protein uS7 family. Part of the 30S ribosomal subunit.

It localises to the plastid. The protein localises to the chloroplast. One of the primary rRNA binding proteins, it binds directly to 16S rRNA where it nucleates assembly of the head domain of the 30S subunit. The chain is Small ribosomal subunit protein uS7cz/uS7cy (rps7-A) from Ceratophyllum demersum (Rigid hornwort).